Consider the following 202-residue polypeptide: ATP-dependent Clp protease proteolytic subunit (202 aa).

Serine 106 acts as the Nucleophile in catalysis. Histidine 131 is an active-site residue.

It belongs to the peptidase S14 family. In terms of assembly, fourteen ClpP subunits assemble into 2 heptameric rings which stack back to back to give a disk-like structure with a central cavity, resembling the structure of eukaryotic proteasomes.

It is found in the cytoplasm. The catalysed reaction is Hydrolysis of proteins to small peptides in the presence of ATP and magnesium. alpha-casein is the usual test substrate. In the absence of ATP, only oligopeptides shorter than five residues are hydrolyzed (such as succinyl-Leu-Tyr-|-NHMec, and Leu-Tyr-Leu-|-Tyr-Trp, in which cleavage of the -Tyr-|-Leu- and -Tyr-|-Trp bonds also occurs).. In terms of biological role, cleaves peptides in various proteins in a process that requires ATP hydrolysis. Has a chymotrypsin-like activity. Plays a major role in the degradation of misfolded proteins. The protein is ATP-dependent Clp protease proteolytic subunit of Methylibium petroleiphilum (strain ATCC BAA-1232 / LMG 22953 / PM1).